The chain runs to 507 residues: Arabinose import ATP-binding protein AraG (507 aa).

2 consecutive ABC transporter domains span residues 8-243 and 255-499; these read LSFH…MVGR and PHGE…MLRI. ATP is bound at residue 40-47; sequence GENGAGKS.

It belongs to the ABC transporter superfamily. Arabinose importer (TC 3.A.1.2.2) family. In terms of assembly, the complex is composed of two ATP-binding proteins (AraG), two transmembrane proteins (AraH) and a solute-binding protein (AraF).

Its subcellular location is the cell inner membrane. The catalysed reaction is L-arabinose(out) + ATP + H2O = L-arabinose(in) + ADP + phosphate + H(+). Functionally, part of the ABC transporter complex AraFGH involved in arabinose import. Responsible for energy coupling to the transport system. The chain is Arabinose import ATP-binding protein AraG from Pectobacterium atrosepticum (strain SCRI 1043 / ATCC BAA-672) (Erwinia carotovora subsp. atroseptica).